Consider the following 489-residue polypeptide: 3-octaprenyl-4-hydroxybenzoate carboxy-lyase (489 aa).

N172 is a Mn(2+) binding site. Residues 175 to 177 (IYR), 189 to 191 (RWL), and 194 to 195 (RG) each bind prenylated FMN. E238 contacts Mn(2+). D287 acts as the Proton donor in catalysis.

It belongs to the UbiD family. In terms of assembly, homohexamer. It depends on prenylated FMN as a cofactor. Mn(2+) serves as cofactor.

It localises to the cell membrane. It catalyses the reaction a 4-hydroxy-3-(all-trans-polyprenyl)benzoate + H(+) = a 2-(all-trans-polyprenyl)phenol + CO2. Its pathway is cofactor biosynthesis; ubiquinone biosynthesis. Catalyzes the decarboxylation of 3-octaprenyl-4-hydroxy benzoate to 2-octaprenylphenol, an intermediate step in ubiquinone biosynthesis. The protein is 3-octaprenyl-4-hydroxybenzoate carboxy-lyase of Salmonella arizonae (strain ATCC BAA-731 / CDC346-86 / RSK2980).